A 642-amino-acid polypeptide reads, in one-letter code: Chaperone protein DnaK (642 aa).

Position 198 is a phosphothreonine; by autocatalysis (threonine 198). A disordered region spans residues 602 to 642 (AYAKMTEKQQSDDGAGTQNADHKEDDVVDADFEEVKSDKKD).

Belongs to the heat shock protein 70 family.

Its function is as follows. Acts as a chaperone. The sequence is that of Chaperone protein DnaK from Dichelobacter nodosus (strain VCS1703A).